A 156-amino-acid polypeptide reads, in one-letter code: Rhombotin-1 (156 aa).

LIM zinc-binding domains lie at 24–83 and 88–147; these read CAGC…RLFG and CAAC…EGQL.

In terms of tissue distribution, expressed mainly in the central nervous. Low level of expression in other tissues including thymus.

The protein resides in the nucleus. In terms of biological role, may be involved in gene regulation within neural lineage cells potentially by direct DNA binding or by binding to other transcription factors. This is Rhombotin-1 (LMO1) from Homo sapiens (Human).